An 898-amino-acid chain; its full sequence is Serine/threonine-protein kinase TAO3 (898 aa).

The 254-residue stretch at 24–277 (FIDLHEIGHG…AVELLRHDFI (254 aa)) folds into the Protein kinase domain. Residues 30–38 (IGHGSFGAV) and lysine 53 each bind ATP. Aspartate 147 serves as the catalytic Proton acceptor. 2 disordered regions span residues 316-375 (TRNG…DESS) and 405-424 (DEAG…SVQS). Serine 324 bears the Phosphoserine; by ATM mark. Residues serine 343, serine 346, and serine 349 each carry the phosphoserine modification. A compositionally biased stretch (low complexity) spans 349–366 (SIPSTSVSTGSRSSSVNS). Threonine 357 is modified (phosphothreonine). Serine 359 bears the Phosphoserine mark. The span at 405–416 (DEAGHGDPRPEP) shows a compositional bias: basic and acidic residues. Residue serine 442 is modified to Phosphoserine. Coiled-coil stretches lie at residues 452-502 (EQEN…THAN), 548-649 (FLES…HAML), and 754-871 (LKTL…QERE). Residues 565 to 596 (EEMNEDHSTPKKEKQERISKHKENLQHTQAEE) form a disordered region. Lysine 830 bears the N6-acetyllysine mark.

Belongs to the protein kinase superfamily. STE Ser/Thr protein kinase family. STE20 subfamily. As to quaternary structure, self-associates. Interacts with ERN1 and TRAF2. Interaction with TRAF2 is facilitated under ER stress conditions, such as treatment with tunicamycin, and may promote TRAF2 phosphorylation. Interacts (via N-terminus) with STK25; the interaction promotes STK25 abundance at the level of protein expression and/or stability. Autophosphorylated. Phosphorylation at Ser-324 by ATM following DNA damage is required for activation of the p38/MAPK14 stress-activated MAPK cascade. Phosphorylated at Ser-324 and on Tyr residues during T cell activation. Phosphorylated by LRRK2.

Its subcellular location is the cytoplasm. The protein resides in the cell membrane. The protein localises to the membrane raft. It is found in the lipid droplet. It catalyses the reaction L-seryl-[protein] + ATP = O-phospho-L-seryl-[protein] + ADP + H(+). The catalysed reaction is L-threonyl-[protein] + ATP = O-phospho-L-threonyl-[protein] + ADP + H(+). Serine/threonine-protein kinase that acts as a regulator of the p38/MAPK14 stress-activated MAPK cascade and of the MAPK8/JNK cascade. In response to DNA damage, involved in the G2/M transition DNA damage checkpoint by activating the p38/MAPK14 stress-activated MAPK cascade, probably by mediating phosphorylation of upstream MAP2K3 and MAP2K6 kinases. Inhibits basal activity of the MAPK8/JNK cascade and diminishes its activation in response to epidermal growth factor (EGF). Positively regulates canonical T cell receptor (TCR) signaling by preventing early PTPN6/SHP1-mediated inactivation of LCK, ensuring sustained TCR signaling that is required for optimal activation and differentiation of T cells. Phosphorylates PTPN6/SHP1 on 'Thr-394', leading to its polyubiquitination and subsequent proteasomal degradation. Required for cell surface expression of metalloprotease ADAM10 on type 1 transitional B cells which is necessary for their NOTCH-mediated development into marginal zone B cells. Also required for the NOTCH-mediated terminal differentiation of splenic conventional type 2 dendritic cells. Positively regulates osteoblast differentiation by acting as an upstream activator of the JNK pathway. Promotes JNK signaling in hepatocytes and positively regulates hepatocyte lipid storage by inhibiting beta-oxidation and triacylglycerol secretion while enhancing lipid synthesis. Restricts age-associated inflammation by negatively regulating differentiation of macrophages and their production of pro-inflammatory cytokines. Plays a role in negatively regulating the abundance of regulatory T cells in white adipose tissue. The protein is Serine/threonine-protein kinase TAO3 (Taok3) of Mus musculus (Mouse).